Here is a 229-residue protein sequence, read N- to C-terminus: Probable coenzyme A transferase subunit alpha (229 aa).

26 to 32 (GGFGGVG) provides a ligand contact to CoA.

It belongs to the 3-oxoacid CoA-transferase subunit A family. In terms of assembly, heterodimer of a subunit alpha and a subunit beta.

The protein is Probable coenzyme A transferase subunit alpha (yodS) of Bacillus subtilis (strain 168).